Here is a 473-residue protein sequence, read N- to C-terminus: Photosystem II CP43 reaction center protein (473 aa).

The propeptide occupies Met1–Glu14. Position 15 is an N-acetylthreonine (Thr15). Thr15 is subject to Phosphothreonine. The next 5 helical transmembrane spans lie at Leu69 to Ala93, Leu134 to Asn155, Lys178 to Thr200, Lys255 to Ser275, and Trp291 to Ala312. Glu367 contacts [CaMn4O5] cluster. The helical transmembrane segment at Arg447–Pro471 threads the bilayer.

Belongs to the PsbB/PsbC family. PsbC subfamily. PSII is composed of 1 copy each of membrane proteins PsbA, PsbB, PsbC, PsbD, PsbE, PsbF, PsbH, PsbI, PsbJ, PsbK, PsbL, PsbM, PsbT, PsbX, PsbY, PsbZ, Psb30/Ycf12, at least 3 peripheral proteins of the oxygen-evolving complex and a large number of cofactors. It forms dimeric complexes. It depends on Binds multiple chlorophylls and provides some of the ligands for the Ca-4Mn-5O cluster of the oxygen-evolving complex. It may also provide a ligand for a Cl- that is required for oxygen evolution. PSII binds additional chlorophylls, carotenoids and specific lipids. as a cofactor.

It localises to the plastid. The protein localises to the chloroplast thylakoid membrane. One of the components of the core complex of photosystem II (PSII). It binds chlorophyll and helps catalyze the primary light-induced photochemical processes of PSII. PSII is a light-driven water:plastoquinone oxidoreductase, using light energy to abstract electrons from H(2)O, generating O(2) and a proton gradient subsequently used for ATP formation. In Cucumis sativus (Cucumber), this protein is Photosystem II CP43 reaction center protein.